The primary structure comprises 1068 residues: Phosphatidylinositol 4,5-bisphosphate 3-kinase catalytic subunit alpha isoform (1068 aa).

The 90-residue stretch at 16–105 (MPPRILVECL…QPFLKVIEPV (90 aa)) folds into the PI3K-ABD domain. In terms of domain architecture, PI3K-RBD spans 187–289 (KGQIIVVIWV…GRMPNLMLMA (103 aa)). A C2 PI3K-type domain is found at 330–487 (INSALRIKIL…DWFSSVVKFP (158 aa)). Residues 517 to 694 (LARDNELREN…GLLLESYCRA (178 aa)) enclose the PIK helical domain. Residues 765–1051 (RLEECRIMSS…QMNDAHHGGW (287 aa)) form the PI3K/PI4K catalytic domain. The segment at 771-777 (IMSSAKR) is G-loop. The catalytic loop stretch occupies residues 912-920 (GIGDRHNSN). Residues 931–957 (HIDFGHFLDHKKKKFGYKRERVPFVLT) form an activation loop region.

The protein belongs to the PI3/PI4-kinase family. As to quaternary structure, heterodimer of a catalytic subunit PIK3CA and a p85 regulatory subunit (PIK3R1, PIK3R2 or PIK3R3). Interacts with IRS1 in nuclear extracts. Interacts with RUFY3. Interacts with RASD2. Interacts with APPL1. Interacts with HRAS and KRAS. Interaction with HRAS/KRAS is required for PI3K pathway signaling and cell proliferation stimulated by EGF and FGF2. Interacts with FAM83B; activates the PI3K/AKT signaling cascade.

The enzyme catalyses L-seryl-[protein] + ATP = O-phospho-L-seryl-[protein] + ADP + H(+). It carries out the reaction a 1,2-diacyl-sn-glycero-3-phospho-(1D-myo-inositol) + ATP = a 1,2-diacyl-sn-glycero-3-phospho-(1D-myo-inositol-3-phosphate) + ADP + H(+). It catalyses the reaction a 1,2-diacyl-sn-glycero-3-phospho-(1D-myo-inositol-4,5-bisphosphate) + ATP = a 1,2-diacyl-sn-glycero-3-phospho-(1D-myo-inositol-3,4,5-trisphosphate) + ADP + H(+). The catalysed reaction is 1,2-dioctanoyl-sn-glycero-3-phospho-(1D-myo-inositol-4,5-bisphosphate) + ATP = 1,2-dioctanoyl-sn-glycero-3-phospho-(1D-myo-inositol-3,4,5-trisphosphate) + ADP + H(+). The enzyme catalyses 1-octadecanoyl-2-(5Z,8Z,11Z,14Z)-eicosatetraenoyl-sn-glycero-3-phospho-1D-myo-inositol 4,5-bisphosphate + ATP = 1-octadecanoyl-2-(5Z,8Z,11Z,14Z-eicosatetraenoyl)-sn-glycero-3-phospho-(1D-myo-inositol 3,4,5-triphosphate) + ADP + H(+). The protein operates within phospholipid metabolism; phosphatidylinositol phosphate biosynthesis. In terms of biological role, phosphoinositide-3-kinase (PI3K) phosphorylates phosphatidylinositol (PI) and its phosphorylated derivatives at position 3 of the inositol ring to produce 3-phosphoinositides. Uses ATP and PtdIns(4,5)P2 (phosphatidylinositol 4,5-bisphosphate) to generate phosphatidylinositol 3,4,5-trisphosphate (PIP3). PIP3 plays a key role by recruiting PH domain-containing proteins to the membrane, including AKT1 and PDPK1, activating signaling cascades involved in cell growth, survival, proliferation, motility and morphology. Participates in cellular signaling in response to various growth factors. Involved in the activation of AKT1 upon stimulation by receptor tyrosine kinases ligands such as EGF, insulin, IGF1, VEGFA and PDGF. Involved in signaling via insulin-receptor substrate (IRS) proteins. Essential in endothelial cell migration during vascular development through VEGFA signaling, possibly by regulating RhoA activity. Required for lymphatic vasculature development, possibly by binding to RAS and by activation by EGF and FGF2, but not by PDGF. Regulates invadopodia formation through the PDPK1-AKT1 pathway. Participates in cardiomyogenesis in embryonic stem cells through a AKT1 pathway. Participates in vasculogenesis in embryonic stem cells through PDK1 and protein kinase C pathway. In addition to its lipid kinase activity, it displays a serine-protein kinase activity that results in the autophosphorylation of the p85alpha regulatory subunit as well as phosphorylation of other proteins such as 4EBP1, H-Ras, the IL-3 beta c receptor and possibly others. Plays a role in the positive regulation of phagocytosis and pinocytosis. This chain is Phosphatidylinositol 4,5-bisphosphate 3-kinase catalytic subunit alpha isoform (PIK3CA), found in Bos taurus (Bovine).